We begin with the raw amino-acid sequence, 348 residues long: Phospho-2-dehydro-3-deoxyheptonate aldolase, Trp-sensitive (348 aa).

This sequence belongs to the class-I DAHP synthase family.

The catalysed reaction is D-erythrose 4-phosphate + phosphoenolpyruvate + H2O = 7-phospho-2-dehydro-3-deoxy-D-arabino-heptonate + phosphate. It participates in metabolic intermediate biosynthesis; chorismate biosynthesis; chorismate from D-erythrose 4-phosphate and phosphoenolpyruvate: step 1/7. Its function is as follows. Stereospecific condensation of phosphoenolpyruvate (PEP) and D-erythrose-4-phosphate (E4P) giving rise to 3-deoxy-D-arabino-heptulosonate-7-phosphate (DAHP). This is Phospho-2-dehydro-3-deoxyheptonate aldolase, Trp-sensitive (aroH) from Escherichia coli (strain K12).